Here is a 414-residue protein sequence, read N- to C-terminus: 2,3-diketo-5-methylthiopentyl-1-phosphate enolase (414 aa).

Lys-99 (proton acceptor) is an active-site residue. Substrate-binding positions include Lys-148, Lys-174–Glu-177, His-265, Gly-338, and Gly-360–Gly-361. Mg(2+) contacts are provided by Lys-174, Asp-176, and Glu-177. An N6-carboxylysine modification is found at Lys-174.

It belongs to the RuBisCO large chain family. Type IV subfamily. Homodimer. Requires Mg(2+) as cofactor.

It carries out the reaction 5-methylsulfanyl-2,3-dioxopentyl phosphate = 2-hydroxy-5-methylsulfanyl-3-oxopent-1-enyl phosphate. The protein operates within amino-acid biosynthesis; L-methionine biosynthesis via salvage pathway; L-methionine from S-methyl-5-thio-alpha-D-ribose 1-phosphate: step 3/6. Catalyzes the enolization of 2,3-diketo-5-methylthiopentyl-1-phosphate (DK-MTP-1-P) into 2-hydroxy-3-keto-5-methylthiopentenyl-1-phosphate (HK-MTPenyl-1-P). In Bacillus cereus (strain AH187), this protein is 2,3-diketo-5-methylthiopentyl-1-phosphate enolase.